Here is a 350-residue protein sequence, read N- to C-terminus: Putative ATP-binding protein BruAb2_0487 (350 aa).

Residues 4-234 (VSLRGISKTF…PANKFVAGFI (231 aa)) form the ABC transporter domain. ATP is bound at residue 36 to 43 (GPSGCGKS).

This sequence belongs to the ABC transporter superfamily. In terms of assembly, the complex is composed of two ATP-binding proteins (BruAb2_0487), two transmembrane proteins (BruAb2_0483) and a solute-binding protein (BruAb2_0484).

It localises to the cell inner membrane. Functionally, probably part of an ABC transporter complex. Probably responsible for energy coupling to the transport system. This Brucella abortus biovar 1 (strain 9-941) protein is Putative ATP-binding protein BruAb2_0487.